The following is a 458-amino-acid chain: V-type ATP synthase beta chain (458 aa).

This sequence belongs to the ATPase alpha/beta chains family.

Its function is as follows. Produces ATP from ADP in the presence of a proton gradient across the membrane. The V-type beta chain is a regulatory subunit. The chain is V-type ATP synthase beta chain from Fusobacterium nucleatum subsp. nucleatum (strain ATCC 25586 / DSM 15643 / BCRC 10681 / CIP 101130 / JCM 8532 / KCTC 2640 / LMG 13131 / VPI 4355).